We begin with the raw amino-acid sequence, 2837 residues long: MVDSSYMYASGAFVPRVSYSRSIDLKDSLLDLVKVQKESYDSFTPKNKGNERLEVIFHTIFPINDPLRRATIEFISCRVDDPKYDESECIKRGVTFSAQVIASIRLVVMQDGISLDEYKSIKESGDHSKLATVVKSIEEQKVHFCGLPMMTDKGTFIINGVEKVIVSQMHRSPGVFFDSDKGKTYNSGKLIYSARIIPYRGSWLDIEFDVKDHLYFRVDRKRKLPISVLLKALGLSNNDILDRFYEKIKYVKHKDGWKVPFVPDKFKGVRLPFDLMDIEGNVLLKANVRITSRLAKKLYDNELKEYLVPFNSICGLFLAEDLMDSASSTKILSAGESIKLEDIKKLELLSVDEISVLNIDNLFVGPYILNTLFLDENMSYQDALYEIYRVLRPGEVPVLEIVEEFFRNLFFSPEYYDLSNIGRLKLNSYLGLNYDEDLTVLTHEDIIEIVKKIVLLRDGQGSVDDIDHLGNRRVRSVGEFIENQFRTGLLKLERAIVDSMSTSSLDKVSPSDFINPKVLTNVLRDFFNSSQLSQFMDQTNPLSEITHKRRLSALGPGGLTRERAGFEVRDVHPTHYGRICPIETPEGQNIGLINSLAIYARINKYGFIESPYRKVVNRVVTDQIEYLSAIDEGSHHIADTSVKLDENNCFVDDMLYCRYAGSFVMVSSDQVSYIDVSPKQVISVAASLIPFLENDDANRALMGSNMQRQAVPLLKPTAPLVATGMESFVASGSGAVVLAKRDGIVDSSDSNSIVIRAFDKERVNYLDVDIYHLRKFQRSNHNTCINQRPLVCVGDYVKKGDVIADGPAINSGELALGKNLLVAFMSWQGYNFEDSIIISSEVVKKDLFTSIHIEEFDCVVHDTPLGSEKITRAIPGVNEENLYHLDDSGIVKIGTRVGPGYILVGKVTPKPSLSLPPETKLLMTIFGEKSFDCADSSLYTSPDVEGTVIDVQVFTRRGVEENERALLIKQKEINDFEEERDYIINVTSEYFYDELKKLLINSGSQDREKFDSIEREQWWGIGLKNQSISEQVKSLKKDFDEKVSHAIAQFKRKVEKLHEGYDLPQGVSMSVKVFIAVKHSLQPGDKMAGRHGNKGVISRVVPVEDMPYLEDGTPVDIILNPLGVPSRMNVGQILETHVGWACRKLGEKVSNILDEINKIKSAFCKGIRSLNDDNFTQFAVAYLDNKKIENIDDDEITASVLNTPNKNALNDELNELVENYLNSCKSSYSNLRNFLIEVYSYGSNVSICNDIRNISDNNLIEFARKLRDGVPVAAPVFEGPKDEQIAKLFELAGLDNSGQAVLYDGCSGEKFDRKVTVGYMYMLKLHHLVDGKIHARSVGPYSLVTQQPLGGKSHFGGQRFGEMECWALQAYGAAYTLQEMLTVKSDDINGRVKIYESIIKGDSNFECGIPESFNVMIKELRSLCLNVDLKQNDVVIEDISHTNIAQPFNEVSISIASPESIKRISCGEIEDVLTANYRTFKVEKGGLFCPKVFGPVNDDECLCGKYKKRRHRGRICEKCGVEVTSSKVRRERMGHIELASPVAHIWFLKSLPSRIGALLDMSLRDIENILYSDNYIVIDPLVSPFEKGEIISEKAYNEAKDSYGIDSFVAMQGVEAIRELLTRLDLHEIRKDLRLELESVASEIRRKKIIKRLRIVENFIKSGNRPEWMILTTIPILPPDLRPLVSLESGRPAVSDLNHHYRTIINRNNRLRKLLSLNPPEIMIRNEKRMLQEAVDSLFDNSRRNTLVNKAGAVGYKKSISDMLKGKQGRFRQNLLGKRVDYSGRSVIVVGPTLKLNQCGLPKRMALELFKPFVYSKLKMYGMAPTIKFASKLIRAEKPEVWDMLEEVIKEHPVLLNRAPTLHRLGIQAFEPILIEGKAIQLHPLVCTAFNADFDGDQMAVHVPISLEAQLEARVLMMSTNNVLSPSNGRPIIVPSKDIVLGIYYLTLQEPKEDNLPSFGAFCEVEHSLSDGILHIHSSIKYRMEYINSSGETHYKTVCTTPGRLILWQIFPKHENLGFDLINQILTVKEITGIVDLVYRNCGQSATVAFSDKLMVLGFEYATFSGVSFGRCDMVIPETKATHVDHARGEIKKFSMQYQDGLITRSERYNKVIDEWSKCTDMIANDMLKAISIYDGNSKYNSVYMMVNSGARGSTSQMKQLAGMRGLMTKPSGEIIETPIISNFREGLNVFEYFNSTHGARKGLADTALKTANSGYLTRRLVDVSQNCIVAKHDCKTKNGLVVRATVEGSTIVASLESVVLGRTAANDIYNPVTKELLVKAGELIDEDKVKQISIAGLDVVKIRSPLTCEISPGVCSLCYGRDLATGKIVSIGEAVGVIAAQSVGEPGTQLTMRTFHIGGVMTRGVESSNIIASINAKIKLNNSNIIIDRNGNKIVISRSCEVVLIDSLGSEKLKHSVPYGAKLYVDESGSVKIGDKVAEWDPYTLPIITEKTGTVSYQDLKDGISITEVMDESTGISSKVVKDWKLHSGGANLRPRIVLLDDNGKVMTLASGVEACYFIPIGAVLNVQDGQKVHAGDVITRTPRESVKTRDITGGLPRVIELFEARRPKEHAIVSEIDGYVAFSEKDRRGKRSILIKPVDEQISPVEYLVSRSKHVIVNESDFVRKGDLLMDGDPDLHDILRVLGLEALAHYMISEIQQVYRLQGVRIDNKHLEVILKQMLQKVEITDPGDTMYLVGESIDKLEVDRENDAMSNSGKRPTHYLPILQGITRASLETSSFISAASFQETTKVLTEAAFCGKSDPLSGLKENVIVGRLIPAGTGLIMNKIRALSLCDNVDKYEKYFDIETYDEEWLMDNGCHLHSDEEESVVAYDQSN.

The tract at residues 1 to 1433 is DNA-directed RNA polymerase subunit beta; sequence MVDSSYMYAS…CLNVDLKQND (1433 aa). The segment at 1436-2837 is DNA-directed RNA polymerase subunit beta'; it reads IEDISHTNIA…ESVVAYDQSN (1402 aa). 4 residues coordinate Zn(2+): Cys-1501, Cys-1503, Cys-1516, and Cys-1519. Residues Asp-1893, Asp-1895, and Asp-1897 each coordinate Mg(2+). Positions 2235, 2309, 2316, and 2319 each coordinate Zn(2+).

It in the N-terminal section; belongs to the RNA polymerase beta chain family. In the C-terminal section; belongs to the RNA polymerase beta' chain family. In terms of assembly, the RNAP catalytic core consists of 2 alpha, 1 beta/beta' and 1 omega subunit. When a sigma factor is associated with the core the holoenzyme is formed, which can initiate transcription. Mg(2+) is required as a cofactor. Requires Zn(2+) as cofactor.

The enzyme catalyses RNA(n) + a ribonucleoside 5'-triphosphate = RNA(n+1) + diphosphate. DNA-dependent RNA polymerase catalyzes the transcription of DNA into RNA using the four ribonucleoside triphosphates as substrates. The chain is Bifunctional DNA-directed RNA polymerase subunit beta-beta' (rpoBC) from Wolbachia pipientis wMel.